We begin with the raw amino-acid sequence, 1551 residues long: Pentafunctional AROM polypeptide (1551 aa).

The interval 1–379 (MSIEKVPILG…YQLKAHEVSK (379 aa)) is 3-dehydroquinate synthase. NAD(+) is bound by residues 42–44 (DTN), 80–83 (ENNK), 111–113 (GGV), and aspartate 116. A 7-phospho-2-dehydro-3-deoxy-D-arabino-heptonate-binding site is contributed by arginine 127. 136 to 137 (TT) serves as a coordination point for NAD(+). The 7-phospho-2-dehydro-3-deoxy-D-arabino-heptonate site is built by aspartate 143 and lysine 149. Lysine 158 contacts NAD(+). Asparagine 159 is a binding site for 7-phospho-2-dehydro-3-deoxy-D-arabino-heptonate. NAD(+)-binding positions include 176-179 (YLES) and asparagine 187. A Zn(2+)-binding site is contributed by glutamate 191. 7-phospho-2-dehydro-3-deoxy-D-arabino-heptonate-binding positions include 191-194 (EVVK) and lysine 243. The active-site Proton acceptor; for 3-dehydroquinate synthase activity is the glutamate 253. 7-phospho-2-dehydro-3-deoxy-D-arabino-heptonate-binding positions include 257–261 (RNLLN) and histidine 264. Histidine 264 serves as a coordination point for Zn(2+). Histidine 268 functions as the Proton acceptor; for 3-dehydroquinate synthase activity in the catalytic mechanism. Residues histidine 280 and lysine 351 each contribute to the 7-phospho-2-dehydro-3-deoxy-D-arabino-heptonate site. Histidine 280 is a binding site for Zn(2+). Residues 392 to 838 (VHPFKQPPQE…WDILHSKFNI (447 aa)) form an EPSP synthase region. A shikimate kinase region spans residues 858 to 1048 (DKSIIIIGMR…IPSGRSAALS (191 aa)). 865-872 (GMRGTGKS) contacts ATP. A 3-dehydroquinase region spans residues 1049-1258 (LTVPDLNAIS…NEDGLLTIKE (210 aa)). Residue lysine 1194 is the Schiff-base intermediate with substrate; for 3-dehydroquinate dehydratase activity of the active site. Residues 1271–1551 (AKKFWVIGSP…DVIHRAVVEE (281 aa)) form a shikimate dehydrogenase region.

It in the N-terminal section; belongs to the sugar phosphate cyclases superfamily. Dehydroquinate synthase family. The protein in the 2nd section; belongs to the EPSP synthase family. In the 3rd section; belongs to the shikimate kinase family. This sequence in the 4th section; belongs to the type-I 3-dehydroquinase family. It in the C-terminal section; belongs to the shikimate dehydrogenase family. Homodimer. The cofactor is Zn(2+).

Its subcellular location is the cytoplasm. The catalysed reaction is 7-phospho-2-dehydro-3-deoxy-D-arabino-heptonate = 3-dehydroquinate + phosphate. It carries out the reaction 3-dehydroquinate = 3-dehydroshikimate + H2O. The enzyme catalyses shikimate + NADP(+) = 3-dehydroshikimate + NADPH + H(+). It catalyses the reaction shikimate + ATP = 3-phosphoshikimate + ADP + H(+). The catalysed reaction is 3-phosphoshikimate + phosphoenolpyruvate = 5-O-(1-carboxyvinyl)-3-phosphoshikimate + phosphate. Its pathway is metabolic intermediate biosynthesis; chorismate biosynthesis; chorismate from D-erythrose 4-phosphate and phosphoenolpyruvate: step 2/7. It functions in the pathway metabolic intermediate biosynthesis; chorismate biosynthesis; chorismate from D-erythrose 4-phosphate and phosphoenolpyruvate: step 3/7. The protein operates within metabolic intermediate biosynthesis; chorismate biosynthesis; chorismate from D-erythrose 4-phosphate and phosphoenolpyruvate: step 4/7. It participates in metabolic intermediate biosynthesis; chorismate biosynthesis; chorismate from D-erythrose 4-phosphate and phosphoenolpyruvate: step 5/7. Its pathway is metabolic intermediate biosynthesis; chorismate biosynthesis; chorismate from D-erythrose 4-phosphate and phosphoenolpyruvate: step 6/7. Its function is as follows. The AROM polypeptide catalyzes 5 consecutive enzymatic reactions in prechorismate polyaromatic amino acid biosynthesis. The sequence is that of Pentafunctional AROM polypeptide from Candida tropicalis (strain ATCC MYA-3404 / T1) (Yeast).